A 507-amino-acid polypeptide reads, in one-letter code: Probable D-lactate dehydrogenase, mitochondrial (507 aa).

The transit peptide at M1 to E52 directs the protein to the mitochondrion. K36 is subject to N6-acetyllysine. An FAD-binding PCMH-type domain is found at R62–A265. K315 is modified (N6-acetyllysine). K358 is subject to N6-acetyllysine; alternate. K358 is modified (N6-succinyllysine; alternate). K445 and K472 each carry N6-acetyllysine.

This sequence belongs to the FAD-binding oxidoreductase/transferase type 4 family. Interacts with CSRP3. The cofactor is FAD. In terms of tissue distribution, expressed moderately in heart and liver and at lower levels in skeletal muscle and kidney.

The protein resides in the mitochondrion. The enzyme catalyses (R)-lactate + 2 Fe(III)-[cytochrome c] = 2 Fe(II)-[cytochrome c] + pyruvate + 2 H(+). Its function is as follows. Involved in D-lactate, but not L-lactate catabolic process. The sequence is that of Probable D-lactate dehydrogenase, mitochondrial from Homo sapiens (Human).